The sequence spans 112 residues: Nucleoid-associated protein FTW_0607 (112 aa).

The segment at 1–27 is disordered; that stretch reads MNFDMSKLMQQAQKMQEQMKKAQQERE. Basic and acidic residues predominate over residues 17-27; sequence EQMKKAQQERE.

The protein belongs to the YbaB/EbfC family. As to quaternary structure, homodimer.

Its subcellular location is the cytoplasm. It is found in the nucleoid. Functionally, binds to DNA and alters its conformation. May be involved in regulation of gene expression, nucleoid organization and DNA protection. This Francisella tularensis subsp. tularensis (strain WY96-3418) protein is Nucleoid-associated protein FTW_0607.